The following is a 395-amino-acid chain: Acetate kinase 2 (395 aa).

Position 8 (N8) interacts with Mg(2+). ATP is bound at residue K15. Substrate is bound at residue R89. Residue D146 is the Proton donor/acceptor of the active site. ATP contacts are provided by residues 206–210, 283–285, and 331–335; these read HIGNG, DMR, and GVGEN. Mg(2+) is bound at residue E383.

Belongs to the acetokinase family. In terms of assembly, homodimer. Mg(2+) serves as cofactor. Requires Mn(2+) as cofactor.

The protein resides in the cytoplasm. It carries out the reaction acetate + ATP = acetyl phosphate + ADP. It participates in metabolic intermediate biosynthesis; acetyl-CoA biosynthesis; acetyl-CoA from acetate: step 1/2. Its function is as follows. Catalyzes the formation of acetyl phosphate from acetate and ATP. Can also catalyze the reverse reaction. The polypeptide is Acetate kinase 2 (Lactococcus lactis subsp. lactis (strain IL1403) (Streptococcus lactis)).